Consider the following 375-residue polypeptide: Growth/differentiation factor 8 (375 aa).

Positions 1–23 are cleaved as a signal peptide; it reads MQKLAVYVYIYLFMLISVDPVAL. Positions 24-266 are excised as a propeptide; sequence DDGSQPTENA…VTDTPKRSRR (243 aa). Asparagine 71 is a glycosylation site (N-linked (GlcNAc...) asparagine). 4 cysteine pairs are disulfide-bonded: cysteine 272–cysteine 282, cysteine 281–cysteine 340, cysteine 309–cysteine 372, and cysteine 313–cysteine 374.

It belongs to the TGF-beta family. Homodimer; disulfide-linked.

The protein resides in the secreted. Acts specifically as a negative regulator of skeletal muscle growth. This Anser anser anser (Western greylag goose) protein is Growth/differentiation factor 8 (MSTN).